The following is a 435-amino-acid chain: MGPLSAPPCTQHITWKGLLLTASLLNFWNLPTTAQVIIEAKPPKVSEGKDVLLLVHNLPQNLTGYIWYKGQMTDLYHYITSYVVHGQIIYGPAYSGRETVYSNASLLIQNVTQEDAGSYTLHIIKRGDGTGGVTGYFTVTLYSETPKPSISSSNLNPREVMEAVRLICDPETPDASYLWLLNGQNLPMTHRLQLSKTNRTLYLFGVTKYIAGPYECEIRNPVSASRSDPVTLNLLPKLPMPYITINNLNPREKKDVLAFTCEPKSRNYTYIWWLNGQSLPVSPRVKRPIENRILILPSVTRNETGPYQCEIRDRYGGIRSNPVTLNVLYGPDLPRIYPSFTYYRSGENLDLSCFADSNPPAEYSWTINGKFQLSGQKLFIPQITTNHSGLYACSVRNSATGKEISKSMIVKVSETASPQVTYAGPNTWFQEILLL.

Residues 1–34 (MGPLSAPPCTQHITWKGLLLTASLLNFWNLPTTA) form the signal peptide. One can recognise an Ig-like V-type domain in the interval 35–143 (QVIIEAKPPK…TGYFTVTLYS (109 aa)). 3 N-linked (GlcNAc...) asparagine glycosylation sites follow: Asn61, Asn103, and Asn110. A Cell attachment site motif is present at residues 126-128 (RGD). Ig-like C2-type domains follow at residues 148–233 (PSIS…VTLN), 241–326 (PYIT…VTLN), and 334–405 (PRIY…KEIS). 3 cysteine pairs are disulfide-bonded: Cys168–Cys216, Cys261–Cys309, and Cys353–Cys393. 4 N-linked (GlcNAc...) asparagine glycosylation sites follow: Asn198, Asn267, Asn302, and Asn386.

Belongs to the immunoglobulin superfamily. CEA family.

The protein resides in the secreted. In Homo sapiens (Human), this protein is Pregnancy-specific beta-1-glycoprotein 6 (PSG6).